We begin with the raw amino-acid sequence, 507 residues long: Putative F-box/LRR-repeat protein At4g00320 (507 aa).

In terms of domain architecture, F-box spans R12–S60. LRR repeat units follow at residues R135 to F163, Y187 to N212, I214 to R240, I317 to T348, and G349 to G374.

The protein is Putative F-box/LRR-repeat protein At4g00320 of Arabidopsis thaliana (Mouse-ear cress).